Consider the following 408-residue polypeptide: PTI1-like tyrosine-protein kinase 3 (408 aa).

Basic and acidic residues predominate over residues 59–76 (SSENEHLRSPKHHNDFGH). The tract at residues 59–91 (SSENEHLRSPKHHNDFGHHTRKPQAAVKPDALK) is disordered. Residues 113–395 (FGSKSLIGEG…IVVKALQPLL (283 aa)) enclose the Protein kinase domain. ATP contacts are provided by residues 119-127 (IGEGSYGRA) and Lys141. Asp245 acts as the Proton acceptor in catalysis.

Belongs to the protein kinase superfamily. Tyr protein kinase family. In terms of assembly, interacts with OXI1. In terms of processing, phosphorylated by OXI1.

The protein localises to the cell membrane. It carries out the reaction L-tyrosyl-[protein] + ATP = O-phospho-L-tyrosyl-[protein] + ADP + H(+). The protein is PTI1-like tyrosine-protein kinase 3 (PTI13) of Arabidopsis thaliana (Mouse-ear cress).